A 265-amino-acid chain; its full sequence is 5'-nucleotidase SurE (265 aa).

A divalent metal cation contacts are provided by D8, D9, S39, and N96.

Belongs to the SurE nucleotidase family. It depends on a divalent metal cation as a cofactor.

The protein localises to the cytoplasm. It carries out the reaction a ribonucleoside 5'-phosphate + H2O = a ribonucleoside + phosphate. Nucleotidase that shows phosphatase activity on nucleoside 5'-monophosphates. The polypeptide is 5'-nucleotidase SurE (Rubrobacter xylanophilus (strain DSM 9941 / JCM 11954 / NBRC 16129 / PRD-1)).